The chain runs to 492 residues: Glutamate--cysteine ligase A, chloroplastic (492 aa).

Cys156 and Cys376 are joined by a disulfide.

It belongs to the carboxylate-amine ligase family. Glutamate--cysteine ligase type 2 subfamily. As to quaternary structure, homodimer or monomer when oxidized or reduced, respectively. The Cys-156-Cys-376 disulfide bridge is known to modulate the enzyme activity according to the redox status. The oxidized form constitutes the active enzyme.

It localises to the plastid. Its subcellular location is the chloroplast. The enzyme catalyses L-cysteine + L-glutamate + ATP = gamma-L-glutamyl-L-cysteine + ADP + phosphate + H(+). It participates in sulfur metabolism; glutathione biosynthesis; glutathione from L-cysteine and L-glutamate: step 1/2. This chain is Glutamate--cysteine ligase A, chloroplastic (GSH1-1), found in Oryza sativa subsp. japonica (Rice).